The following is a 1247-amino-acid chain: Respiratory nitrate reductase 1 alpha chain (1247 aa).

The 4Fe-4S Mo/W bis-MGD-type domain occupies 43-107 (DKIVRSTHGV…SYSWYLYSAN (65 aa)). Positions 50, 54, 58, and 93 each coordinate [4Fe-4S] cluster. Residue D223 coordinates Mo-bis(molybdopterin guanine dinucleotide).

Belongs to the prokaryotic molybdopterin-containing oxidoreductase family. In terms of assembly, dimer of heterotrimers each composed of an alpha, a beta and a gamma chain. Alpha and beta are catalytic chains; gamma chains are involved in binding the enzyme complex to the cytoplasmic membrane. Interacts with the NarJ chaperone. The cofactor is [4Fe-4S] cluster. Mo-bis(molybdopterin guanine dinucleotide) serves as cofactor.

Its subcellular location is the cell membrane. It catalyses the reaction nitrate + a quinol = a quinone + nitrite + H2O. In terms of biological role, the nitrate reductase enzyme complex allows E.coli to use nitrate as an electron acceptor during anaerobic growth. The alpha chain is the actual site of nitrate reduction. The polypeptide is Respiratory nitrate reductase 1 alpha chain (narG) (Escherichia coli (strain K12)).